We begin with the raw amino-acid sequence, 285 residues long: MNHLYRSFKTIALVGKPRNDINLQMHKNLFHWLMERGYQVLVEKEVAITLELPFEHLATLEEIGHRAQLAIVIGGDGNMLGRARVLAKYDIPLIGINRGNLGFLTDIDPKNAYSQLEACLERGEFFVEERFLLEAKIERASEIVSTSNAVNEAVIHPAKIAHMIDFHVYINDKFAFSQRSDGLIVSTPTGSTAYSLSAGGPILTPNLNAIALVPMFPHTLTSRPLVVDGDSKISIRFAEHNTSQLEVGCDSQITLPFTPDDVVHIQKSEHKLRLLHLKIIIITMC.

Aspartate 76 functions as the Proton acceptor in the catalytic mechanism. NAD(+)-binding positions include 76–77 (DG), 151–152 (NE), histidine 162, arginine 179, aspartate 181, 192–197 (TAYSLS), and glutamine 252.

This sequence belongs to the NAD kinase family. The cofactor is a divalent metal cation.

It is found in the cytoplasm. The enzyme catalyses NAD(+) + ATP = ADP + NADP(+) + H(+). In terms of biological role, involved in the regulation of the intracellular balance of NAD and NADP, and is a key enzyme in the biosynthesis of NADP. Catalyzes specifically the phosphorylation on 2'-hydroxyl of the adenosine moiety of NAD to yield NADP. The polypeptide is NAD kinase (Haemophilus influenzae (strain ATCC 51907 / DSM 11121 / KW20 / Rd)).